Reading from the N-terminus, the 639-residue chain is tRNA uridine 5-carboxymethylaminomethyl modification enzyme MnmG (639 aa).

13–18 is an FAD binding site; that stretch reads GGGHAG. 274–288 provides a ligand contact to NAD(+); the sequence is GPRYCPSIEDKIHRF.

The protein belongs to the MnmG family. As to quaternary structure, homodimer. Heterotetramer of two MnmE and two MnmG subunits. It depends on FAD as a cofactor.

Its subcellular location is the cytoplasm. Its function is as follows. NAD-binding protein involved in the addition of a carboxymethylaminomethyl (cmnm) group at the wobble position (U34) of certain tRNAs, forming tRNA-cmnm(5)s(2)U34. The sequence is that of tRNA uridine 5-carboxymethylaminomethyl modification enzyme MnmG from Polynucleobacter asymbioticus (strain DSM 18221 / CIP 109841 / QLW-P1DMWA-1) (Polynucleobacter necessarius subsp. asymbioticus).